The chain runs to 278 residues: Protein NIF3 homolog (278 aa).

It belongs to the GTP cyclohydrolase I type 2/NIF3 family.

The chain is Protein NIF3 homolog from Schizosaccharomyces pombe (strain 972 / ATCC 24843) (Fission yeast).